A 373-amino-acid chain; its full sequence is Flagellar P-ring protein (373 aa).

The signal sequence occupies residues 1–26 (MRLLFRFLTLVAVLAMSLADVAPAWA).

The protein belongs to the FlgI family. In terms of assembly, the basal body constitutes a major portion of the flagellar organelle and consists of four rings (L,P,S, and M) mounted on a central rod.

It localises to the periplasm. The protein resides in the bacterial flagellum basal body. Its function is as follows. Assembles around the rod to form the L-ring and probably protects the motor/basal body from shearing forces during rotation. This chain is Flagellar P-ring protein, found in Rhizobium etli (strain CIAT 652).